We begin with the raw amino-acid sequence, 270 residues long: Putative pyruvate, phosphate dikinase regulatory protein (270 aa).

Position 148-155 (148-155 (GVSRTSKT)) interacts with ADP.

Belongs to the pyruvate, phosphate/water dikinase regulatory protein family. PDRP subfamily.

It carries out the reaction N(tele)-phospho-L-histidyl/L-threonyl-[pyruvate, phosphate dikinase] + ADP = N(tele)-phospho-L-histidyl/O-phospho-L-threonyl-[pyruvate, phosphate dikinase] + AMP + H(+). It catalyses the reaction N(tele)-phospho-L-histidyl/O-phospho-L-threonyl-[pyruvate, phosphate dikinase] + phosphate + H(+) = N(tele)-phospho-L-histidyl/L-threonyl-[pyruvate, phosphate dikinase] + diphosphate. Bifunctional serine/threonine kinase and phosphorylase involved in the regulation of the pyruvate, phosphate dikinase (PPDK) by catalyzing its phosphorylation/dephosphorylation. The chain is Putative pyruvate, phosphate dikinase regulatory protein from Bacillus cereus (strain B4264).